A 1238-amino-acid polypeptide reads, in one-letter code: Virulence sensor protein BvgS (1238 aa).

The N-terminal stretch at 1 to 32 (MPAPHRLYPRSLICLAQALLAWALLAWAPAQA) is a signal peptide. At 33–307 (SQELTLVGKA…REQQWMADHP (275 aa)) the chain is on the cytoplasmic side. The helical transmembrane segment at 308–331 (VVKVAVLNLFAPFTLFRTDEQFGG) threads the bilayer. Residues 332–541 (ISAAVLQLLQ…PRTWYAYRNE (210 aa)) lie on the Periplasmic side of the membrane. The chain crosses the membrane as a helical span at residues 542 to 563 (IYLLIGLGLLSALLFLSWIVYL). Topologically, residues 564–1238 (RRQIRQRKRA…LEQRPHQDQP (675 aa)) are cytoplasmic. The region spanning 580–651 (QLEFMRVLID…MHEFLLTRVA (72 aa)) is the PAS domain. Residues 652–708 (AEREPRFEDRDVTLHGRTRHVYQWTIPYGDSLGELKGIIGGWIDITERAELLRKLHD) enclose the PAC domain. The Histidine kinase domain maps to 726–948 (TMSHEIRTPM…TVSVDLRLTM (223 aa)). At His-729 the chain carries Phosphohistidine; by autocatalysis. One can recognise a Response regulatory domain in the interval 974 to 1095 (RVLVVDDHKP…ALRQRLNEAV (122 aa)). Asp-1023 carries the post-translational modification 4-aspartylphosphate. One can recognise an HPt domain in the interval 1133-1228 (DEALIRQLLE…AALETQLRAW (96 aa)). A Phosphohistidine modification is found at His-1172.

Activation requires a sequential transfer of a phosphate group from a His in the primary transmitter domain, to an Asp in the receiver domain and to a His in the secondary transmitter domain.

Its subcellular location is the cell inner membrane. It carries out the reaction ATP + protein L-histidine = ADP + protein N-phospho-L-histidine.. Functionally, member of the two-component regulatory system BvgS/BvgA. Phosphorylates BvgA via a four-step phosphorelay in response to environmental signals. This Bordetella pertussis (strain Tohama I / ATCC BAA-589 / NCTC 13251) protein is Virulence sensor protein BvgS (bvgS).